A 142-amino-acid polypeptide reads, in one-letter code: Putative mating-type transcription factor (142 aa).

The protein localises to the nucleus. In Eremothecium gossypii (strain ATCC 10895 / CBS 109.51 / FGSC 9923 / NRRL Y-1056) (Yeast), this protein is Putative mating-type transcription factor.